The following is a 300-amino-acid chain: MKKEHIFWTSICLLLGLVPAPVSSAAEEDEEFTNITDIKPPLQKPTHSFCAMKVDDGPCRAYIKRFFFNILTHQCEEFIYGGCEGNENRFESLEECKEKCARDYPKMTTKLTFQKGKPDFCFLEEDPGICRGYITRYFYNNQSKQCERFKYGGCLGNLNNFESLEECKNTCENPTSDFQVDDHRTQLNTVNNTLINQPTKAPRRWAFHGPSWCLPPADRGLCQANEIRFFYNAIIGKCRPFKYSGCGGNENNFTSKKACITACKKGFIPKSIKGGLIKTKRKKKKQPVKITYVETFVKKT.

Residues 1-24 (MKKEHIFWTSICLLLGLVPAPVSS) form the signal peptide. 2 consecutive BPTI/Kunitz inhibitor domains span residues 50–100 (CAMK…KEKC) and 121–171 (CFLE…KNTC). 6 disulfides stabilise this stretch: cysteine 50–cysteine 100, cysteine 59–cysteine 83, cysteine 75–cysteine 96, cysteine 121–cysteine 171, cysteine 130–cysteine 154, and cysteine 146–cysteine 167. Residue asparagine 141 is glycosylated (N-linked (GlcNAc...) asparagine). The N-linked (GlcNAc...) asparagine glycan is linked to asparagine 191. The region spanning 213-263 (CLPPADRGLCQANEIRFFYNAIIGKCRPFKYSGCGGNENNFTSKKACITAC) is the BPTI/Kunitz inhibitor 3 domain. Intrachain disulfides connect cysteine 213/cysteine 263, cysteine 222/cysteine 246, and cysteine 238/cysteine 259. Asparagine 252 carries N-linked (GlcNAc...) asparagine glycosylation.

It localises to the secreted. Inhibits factor X (X(a)) directly and, in a Xa-dependent way, inhibits VIIa/tissue factor activity, presumably by forming a quaternary Xa/LACI/VIIa/TF complex. It possesses an antithrombotic action and also the ability to associate with lipoproteins in plasma. The polypeptide is Tissue factor pathway inhibitor (TFPI) (Oryctolagus cuniculus (Rabbit)).